Reading from the N-terminus, the 707-residue chain is Protein MICRORCHIDIA 7 (707 aa).

Basic and acidic residues-rich tracts occupy residues 1–11 and 575–587; these read MDNSIHVKREI and DNRDSSPENDREG. Disordered regions lie at residues 1–22 and 568–619; these read MDNSIHVKREIQLPSTSPAGFP and EKSA…SGKD. Over residues 590-613 the composition is skewed to polar residues; it reads SIKTPTPASDKFYSSSYPNHNGDN. Residues 620–701 adopt a coiled-coil conformation; that stretch reads GARLQEELRR…NKIKKMEGSK (82 aa). The short motif at 633–640 is the Nuclear localization signal element; sequence RRKALEVE.

It belongs to the MORC ATPase protein family. Homodimer and heterodimer. Component of an RNA-directed DNA methylation (RdDM) complex. Forms homomeric complexes. The cofactor is Mg(2+). Mn(2+) serves as cofactor.

The protein localises to the nucleus. In terms of biological role, exhibits ATPase activity. Binds DNA/RNA in a non-specific manner and exhibits endonuclease activity. Probably involved in DNA repair. Involved in RNA-directed DNA methylation (RdDM) as a component of the RdDM machinery and required for gene silencing. May also be involved in the regulation of chromatin architecture to maintain gene silencing. Together with MORC4, acts to suppress a wide set of non-methylated protein-coding genes, especially involved in pathogen response. Positive regulators of defense against the oomycete Hyaloperonospora arabidopsidis (Hpa). This Arabidopsis thaliana (Mouse-ear cress) protein is Protein MICRORCHIDIA 7.